The chain runs to 393 residues: Ornithine decarboxylase 2 (393 aa).

Residue lysine 62 is modified to N6-(pyridoxal phosphate)lysine. Pyridoxal 5'-phosphate is bound by residues serine 194, glycine 231, and glutamate 265 to arginine 268. Tyrosine 314 to tyrosine 315 serves as a coordination point for substrate. Cysteine 343 (proton donor; shared with dimeric partner) is an active-site residue. Aspartate 344 is a binding site for substrate. Tyrosine 371 provides a ligand contact to pyridoxal 5'-phosphate.

The protein belongs to the Orn/Lys/Arg decarboxylase class-II family. In terms of assembly, homodimer. Only the dimer is catalytically active, as the active sites are constructed of residues from both monomers. Pyridoxal 5'-phosphate serves as cofactor.

It carries out the reaction L-ornithine + H(+) = putrescine + CO2. It participates in amine and polyamine biosynthesis; putrescine biosynthesis via L-ornithine pathway; putrescine from L-ornithine: step 1/1. With respect to regulation, inhibited by antizyme (AZ) in response to polyamine levels. AZ inhibits the assembly of the functional homodimer by binding to ODC monomers and targeting them for ubiquitin-independent proteolytic destruction by the 26S proteasome. Functionally, catalyzes the first and rate-limiting step of polyamine biosynthesis that converts ornithine into putrescine, which is the precursor for the polyamines, spermidine and spermine. Polyamines are essential for cell proliferation and are implicated in cellular processes, ranging from DNA replication to apoptosis. The sequence is that of Ornithine decarboxylase 2 (Odc2) from Drosophila melanogaster (Fruit fly).